The sequence spans 545 residues: CTP synthase (545 aa).

Residues 1–266 (MTTNYIFVTG…DDYICKRFSL (266 aa)) are amidoligase domain. Serine 14 lines the CTP pocket. Serine 14 serves as a coordination point for UTP. Residues 15 to 20 (SLGKGI) and aspartate 72 each bind ATP. Mg(2+) contacts are provided by aspartate 72 and glutamate 140. CTP is bound by residues 147 to 149 (DIE), 187 to 192 (KTKPTQ), and lysine 223. Residues 187-192 (KTKPTQ) and lysine 223 contribute to the UTP site. 239–241 (KDV) provides a ligand contact to ATP. A Glutamine amidotransferase type-1 domain is found at 291–542 (TIGMVGKYIE…VKAASEYQKR (252 aa)). Glycine 352 contacts L-glutamine. Cysteine 379 serves as the catalytic Nucleophile; for glutamine hydrolysis. L-glutamine is bound by residues 380-383 (LGMQ), glutamate 403, and arginine 470. Residues histidine 515 and glutamate 517 contribute to the active site.

The protein belongs to the CTP synthase family. In terms of assembly, homotetramer.

It carries out the reaction UTP + L-glutamine + ATP + H2O = CTP + L-glutamate + ADP + phosphate + 2 H(+). The enzyme catalyses L-glutamine + H2O = L-glutamate + NH4(+). It catalyses the reaction UTP + NH4(+) + ATP = CTP + ADP + phosphate + 2 H(+). The protein operates within pyrimidine metabolism; CTP biosynthesis via de novo pathway; CTP from UDP: step 2/2. With respect to regulation, allosterically activated by GTP, when glutamine is the substrate; GTP has no effect on the reaction when ammonia is the substrate. The allosteric effector GTP functions by stabilizing the protein conformation that binds the tetrahedral intermediate(s) formed during glutamine hydrolysis. Inhibited by the product CTP, via allosteric rather than competitive inhibition. In terms of biological role, catalyzes the ATP-dependent amination of UTP to CTP with either L-glutamine or ammonia as the source of nitrogen. Regulates intracellular CTP levels through interactions with the four ribonucleotide triphosphates. The chain is CTP synthase from Citrobacter koseri (strain ATCC BAA-895 / CDC 4225-83 / SGSC4696).